Consider the following 40-residue polypeptide: Auxin-responsive endogenous peptide 1 (40 aa).

Residues L7–H29 traverse the membrane as a helical segment.

In terms of tissue distribution, expressed in cotyledons, hypocotyls, roots, newly developing leaves and shoot apical meristem. Not detected in flowers, siliques or mature leaves.

It localises to the cytoplasm. It is found in the nucleus. The protein localises to the membrane. Its function is as follows. Negative regulator of the auxin response. In Arabidopsis thaliana (Mouse-ear cress), this protein is Auxin-responsive endogenous peptide 1.